The primary structure comprises 716 residues: 1,4-alpha-glucan branching enzyme GlgB (716 aa).

Asp399 acts as the Nucleophile in catalysis. Glu452 serves as the catalytic Proton donor.

The protein belongs to the glycosyl hydrolase 13 family. GlgB subfamily. As to quaternary structure, monomer.

It carries out the reaction Transfers a segment of a (1-&gt;4)-alpha-D-glucan chain to a primary hydroxy group in a similar glucan chain.. The protein operates within glycan biosynthesis; glycogen biosynthesis. Catalyzes the formation of the alpha-1,6-glucosidic linkages in glycogen by scission of a 1,4-alpha-linked oligosaccharide from growing alpha-1,4-glucan chains and the subsequent attachment of the oligosaccharide to the alpha-1,6 position. In Rhodopseudomonas palustris (strain BisB5), this protein is 1,4-alpha-glucan branching enzyme GlgB.